We begin with the raw amino-acid sequence, 92 residues long: Small ribosomal subunit protein uS19 (92 aa).

It belongs to the universal ribosomal protein uS19 family.

In terms of biological role, protein S19 forms a complex with S13 that binds strongly to the 16S ribosomal RNA. The protein is Small ribosomal subunit protein uS19 of Macrococcus caseolyticus (strain JCSC5402) (Macrococcoides caseolyticum).